The primary structure comprises 214 residues: Thymidylate kinase (214 aa).

Position 10–17 (10–17) interacts with ATP; it reads GPDGAGKT.

The protein belongs to the thymidylate kinase family.

It carries out the reaction dTMP + ATP = dTDP + ADP. Its function is as follows. Phosphorylation of dTMP to form dTDP in both de novo and salvage pathways of dTTP synthesis. In Lacticaseibacillus casei (strain BL23) (Lactobacillus casei), this protein is Thymidylate kinase.